Consider the following 144-residue polypeptide: Large ribosomal subunit protein uL15 (144 aa).

The interval 1 to 54 (MRLNTLSPAAGAKHAPKRVGRGMGSGLGKTAGRGHKGQKSRSGGGVRPGFEGGQ) is disordered. Gly residues-rich tracts occupy residues 21 to 31 (RGMGSGLGKTA) and 42 to 52 (SGGGVRPGFEG).

It belongs to the universal ribosomal protein uL15 family. As to quaternary structure, part of the 50S ribosomal subunit.

In terms of biological role, binds to the 23S rRNA. This is Large ribosomal subunit protein uL15 from Shewanella oneidensis (strain ATCC 700550 / JCM 31522 / CIP 106686 / LMG 19005 / NCIMB 14063 / MR-1).